The primary structure comprises 112 residues: Seminal vesicle secretory protein 4 (112 aa).

Residues 1-21 form the signal peptide; that stretch reads MKSTSLFLCSLLLLLVTGAIG. Residues 26–112 form a disordered region; the sequence is EKYSQSEEVV…RSRFAQDVLN (87 aa). Composition is skewed to low complexity over residues 36–47 and 85–97; these read SESFASGPSSGS and RSSGGSNMEGESS.

The protein belongs to the SVP2/SVP5/SVP6 family. As to expression, testis.

Its subcellular location is the secreted. The protein resides in the extracellular space. In Rattus norvegicus (Rat), this protein is Seminal vesicle secretory protein 4 (Svs4).